Consider the following 135-residue polypeptide: Protein PsiE homolog (135 aa).

4 consecutive transmembrane segments (helical) span residues 20–40 (VGLI…TIHL), 54–74 (YMLI…ALIV), 82–102 (HFPL…LIIV), and 107–127 (PIDT…LYLA).

The protein belongs to the PsiE family.

It localises to the cell inner membrane. This Yersinia pestis (strain Pestoides F) protein is Protein PsiE homolog.